Consider the following 137-residue polypeptide: Large ribosomal subunit protein uL16 (137 aa).

Belongs to the universal ribosomal protein uL16 family. Part of the 50S ribosomal subunit.

Binds 23S rRNA and is also seen to make contacts with the A and possibly P site tRNAs. The sequence is that of Large ribosomal subunit protein uL16 from Roseobacter denitrificans (strain ATCC 33942 / OCh 114) (Erythrobacter sp. (strain OCh 114)).